The following is a 359-amino-acid chain: Peptide chain release factor 1 (359 aa).

Gln-236 is modified (N5-methylglutamine).

This sequence belongs to the prokaryotic/mitochondrial release factor family. Methylated by PrmC. Methylation increases the termination efficiency of RF1.

The protein resides in the cytoplasm. Its function is as follows. Peptide chain release factor 1 directs the termination of translation in response to the peptide chain termination codons UAG and UAA. This chain is Peptide chain release factor 1, found in Streptococcus pneumoniae serotype 2 (strain D39 / NCTC 7466).